Here is a 366-residue protein sequence, read N- to C-terminus: Aminomethyltransferase (366 aa).

Belongs to the GcvT family. The glycine cleavage system is composed of four proteins: P, T, L and H.

The enzyme catalyses N(6)-[(R)-S(8)-aminomethyldihydrolipoyl]-L-lysyl-[protein] + (6S)-5,6,7,8-tetrahydrofolate = N(6)-[(R)-dihydrolipoyl]-L-lysyl-[protein] + (6R)-5,10-methylene-5,6,7,8-tetrahydrofolate + NH4(+). In terms of biological role, the glycine cleavage system catalyzes the degradation of glycine. In Bacillus cereus (strain G9842), this protein is Aminomethyltransferase.